A 261-amino-acid polypeptide reads, in one-letter code: Methionine aminopeptidase (261 aa).

His78 contributes to the substrate binding site. A divalent metal cation is bound by residues Asp96, Asp107, and His170. Substrate is bound at residue His177. A divalent metal cation-binding residues include Glu202 and Glu233.

It belongs to the peptidase M24A family. Methionine aminopeptidase type 1 subfamily. As to quaternary structure, monomer. Co(2+) serves as cofactor. Zn(2+) is required as a cofactor. Requires Mn(2+) as cofactor. The cofactor is Fe(2+).

The enzyme catalyses Release of N-terminal amino acids, preferentially methionine, from peptides and arylamides.. In terms of biological role, removes the N-terminal methionine from nascent proteins. The N-terminal methionine is often cleaved when the second residue in the primary sequence is small and uncharged (Met-Ala-, Cys, Gly, Pro, Ser, Thr, or Val). Requires deformylation of the N(alpha)-formylated initiator methionine before it can be hydrolyzed. This Buchnera aphidicola subsp. Schizaphis graminum (strain Sg) protein is Methionine aminopeptidase.